The sequence spans 246 residues: MAYLRSSFVFFLLAFVTYTYAATFEVRNNCPYTVWAASTPIGGGRRLDRGQTWVINAPRGTKMARIWGRTNCNFDGDGRGSCQTGDCGGVLQCTGWGKPPNTLAEYALDQFSNLDFWDISLVDGFNIPMTFAPTNPSGGKCHAIHCTANINGECPGSLRVPGGCNNPCTTFGGQQYCCTQGPCGPTDLSRFFKQRCPDAYSYPQDDPTSTFTCPSGSTNYRVVFCPNGVTSPNFPLEMPSSDEEAK.

The first 21 residues, 1 to 21 (MAYLRSSFVFFLLAFVTYTYA), serve as a signal peptide directing secretion. 8 disulfides stabilise this stretch: Cys-30–Cys-225, Cys-72–Cys-82, Cys-87–Cys-93, Cys-141–Cys-213, Cys-146–Cys-196, Cys-154–Cys-164, Cys-168–Cys-177, and Cys-178–Cys-183.

It belongs to the thaumatin family.

Its subcellular location is the vacuole. It carries out the reaction Endohydrolysis of (1-&gt;3)- or (1-&gt;4)-linkages in beta-D-glucans when the glucose residue whose reducing group is involved in the linkage to be hydrolyzed is itself substituted at C-3.. In terms of biological role, antifungal protein that inhibits the growth of several phytopathogenic fungi (e.g. Trichothecium roseum, Fusarium oxysporum, Phytophthora citrophthora and Colletotrichum coccodes). May bind to beta-glucans and have beta-1,3-D-glucanase activity. The polypeptide is Osmotin-like protein TPM-1 (Solanum lycopersicum (Tomato)).